Reading from the N-terminus, the 213-residue chain is Nicotinamidase (213 aa).

The Proton acceptor role is filled by aspartate 10. Residues aspartate 52, histidine 54, and histidine 86 each contribute to the Zn(2+) site. The active site involves lysine 111. Cysteine 156 acts as the Nucleophile in catalysis.

It belongs to the isochorismatase family.

The enzyme catalyses nicotinamide + H2O = nicotinate + NH4(+). The catalysed reaction is pyrazinamide + H2O = pyrazine-2-carboxylate + NH4(+). It functions in the pathway cofactor biosynthesis; nicotinate biosynthesis; nicotinate from nicotinamide: step 1/1. Catalyzes the deamidation of nicotinamide (NAM) into nicotinate. Likely functions in the cyclical salvage pathway for production of NAD from nicotinamide. Functionally, is also able to hydrolyze the first-line antituberculous drug pyrazinamide (PZA) into pyrazinoic acid in vitro, but this reaction is not considered to be physiologically relevant. This Escherichia coli (strain K12) protein is Nicotinamidase.